A 116-amino-acid chain; its full sequence is Large ribosomal subunit protein bL19 (116 aa).

This sequence belongs to the bacterial ribosomal protein bL19 family.

Functionally, this protein is located at the 30S-50S ribosomal subunit interface and may play a role in the structure and function of the aminoacyl-tRNA binding site. The protein is Large ribosomal subunit protein bL19 of Syntrophomonas wolfei subsp. wolfei (strain DSM 2245B / Goettingen).